We begin with the raw amino-acid sequence, 32 residues long: Alpha-2-macroglobulin homolog (32 aa).

The segment at residues 16 to 19 (CGEQ) is a cross-link (isoglutamyl cysteine thioester (Cys-Gln)).

This sequence belongs to the protease inhibitor I39 (alpha-2-macroglobulin) family. In terms of assembly, homodimer; disulfide-linked.

It is found in the secreted. Its function is as follows. Is able to inhibit all four classes of proteinases by a unique 'trapping' mechanism. This protein has a peptide stretch, called the 'bait region' which contains specific cleavage sites for different proteinases. When a proteinase cleaves the bait region, a conformational change is induced in the protein which traps the proteinase. The entrapped enzyme remains active against low molecular weight substrates (activity against high molecular weight substrates is greatly reduced). Following cleavage in the bait region a thioester bond is hydrolyzed and mediates the covalent binding of the protein to the proteinase. This Pacifastacus leniusculus (Signal crayfish) protein is Alpha-2-macroglobulin homolog.